Here is a 317-residue protein sequence, read N- to C-terminus: Testis-specific Y-encoded protein 1 (317 aa).

Disordered regions lie at residues methionine 1–valine 39 and aspartate 91–proline 118. Basic and acidic residues-rich tracts occupy residues glutamine 15–glutamate 26 and glutamate 95–glutamine 112.

The protein belongs to the nucleosome assembly protein (NAP) family. Phosphorylated. Testis. Probably in spermatogonia.

It localises to the cytoplasm. The protein localises to the nucleus. Its function is as follows. May be involved in sperm differentiation and proliferation. The chain is Testis-specific Y-encoded protein 1 (TSPY1) from Bos taurus (Bovine).